Reading from the N-terminus, the 269-residue chain is 4-hydroxy-tetrahydrodipicolinate reductase (269 aa).

NAD(+)-binding positions include 10 to 15, Glu-36, 99 to 101, and 123 to 126; these read GANGRM, GTT, and AANF. The active-site Proton donor/acceptor is the His-156. Residue His-157 coordinates (S)-2,3,4,5-tetrahydrodipicolinate. Lys-160 serves as the catalytic Proton donor. A (S)-2,3,4,5-tetrahydrodipicolinate-binding site is contributed by 166–167; sequence GT.

The protein belongs to the DapB family.

It is found in the cytoplasm. It carries out the reaction (S)-2,3,4,5-tetrahydrodipicolinate + NAD(+) + H2O = (2S,4S)-4-hydroxy-2,3,4,5-tetrahydrodipicolinate + NADH + H(+). The catalysed reaction is (S)-2,3,4,5-tetrahydrodipicolinate + NADP(+) + H2O = (2S,4S)-4-hydroxy-2,3,4,5-tetrahydrodipicolinate + NADPH + H(+). It functions in the pathway amino-acid biosynthesis; L-lysine biosynthesis via DAP pathway; (S)-tetrahydrodipicolinate from L-aspartate: step 4/4. In terms of biological role, catalyzes the conversion of 4-hydroxy-tetrahydrodipicolinate (HTPA) to tetrahydrodipicolinate. This chain is 4-hydroxy-tetrahydrodipicolinate reductase, found in Neisseria gonorrhoeae (strain ATCC 700825 / FA 1090).